The following is a 346-amino-acid chain: Dihydroorotase (346 aa).

The Zn(2+) site is built by histidine 13 and histidine 15. Residues 15-17 (HLR) and asparagine 41 each bind substrate. Residues lysine 99, histidine 136, and histidine 174 each contribute to the Zn(2+) site. N6-carboxylysine is present on lysine 99. Histidine 136 is a binding site for substrate. Position 219 (leucine 219) interacts with substrate. Zn(2+) is bound at residue aspartate 247. Aspartate 247 is a catalytic residue. Histidine 251 and alanine 263 together coordinate substrate.

This sequence belongs to the metallo-dependent hydrolases superfamily. DHOase family. Class II DHOase subfamily. In terms of assembly, homodimer. It depends on Zn(2+) as a cofactor.

The catalysed reaction is (S)-dihydroorotate + H2O = N-carbamoyl-L-aspartate + H(+). It participates in pyrimidine metabolism; UMP biosynthesis via de novo pathway; (S)-dihydroorotate from bicarbonate: step 3/3. Functionally, catalyzes the reversible cyclization of carbamoyl aspartate to dihydroorotate. In Rhizobium leguminosarum bv. trifolii (strain WSM2304), this protein is Dihydroorotase.